A 314-amino-acid polypeptide reads, in one-letter code: Methenyltetrahydromethanopterin cyclohydrolase (314 aa).

It belongs to the MCH family.

The protein resides in the cytoplasm. It carries out the reaction 5,10-methenyl-5,6,7,8-tetrahydromethanopterin + H2O = N(5)-formyl-5,6,7,8-tetrahydromethanopterin + H(+). The protein operates within one-carbon metabolism; methanogenesis from CO(2); 5,10-methenyl-5,6,7,8-tetrahydromethanopterin from CO(2): step 3/3. Catalyzes the reversible interconversion of 5-formyl-H(4)MPT to methenyl-H(4)MPT(+). The chain is Methenyltetrahydromethanopterin cyclohydrolase from Methanocorpusculum labreanum (strain ATCC 43576 / DSM 4855 / Z).